The following is a 103-amino-acid chain: Large ribosomal subunit protein bL21 (103 aa).

Belongs to the bacterial ribosomal protein bL21 family. In terms of assembly, part of the 50S ribosomal subunit. Contacts protein L20.

This protein binds to 23S rRNA in the presence of protein L20. This is Large ribosomal subunit protein bL21 from Nitrosomonas europaea (strain ATCC 19718 / CIP 103999 / KCTC 2705 / NBRC 14298).